A 242-amino-acid chain; its full sequence is DNA repair protein RecO (242 aa).

It belongs to the RecO family.

In terms of biological role, involved in DNA repair and RecF pathway recombination. This chain is DNA repair protein RecO, found in Paracoccus denitrificans (strain Pd 1222).